The primary structure comprises 170 residues: Cytochrome P450 monooxygenase oryQ (170 aa).

C85 serves as a coordination point for heme.

The protein belongs to the cytochrome P450 family. Requires heme as cofactor.

The protein operates within secondary metabolite biosynthesis. Functionally, cytochrome P450 monooxygenase; part of the gene cluster that mediates the biosynthesis of oryzines, natural products with an unusual maleidride backbone. The two subunits of the fungal fatty acid synthase oryfasA and oryfasB probably form octenoic acid. This fatty acid is most likely activated by the acyl-CoA ligase oryP to give octenyl-CoA before the citrate synthase-like protein oryE catalyzes condensation with oxaloacetate to form tricarboxylic acid. The next steps of the pathways are conjectural, but a favorite possible route has been proposed, beginning with decarboxylation and concomitant dehydration by the decarboxylase oryM, followed by tautomerization, which may lead to the production of a diene intermediate. Reduction of this diene intermediate could give the known metabolite piliformic acid. On the pathway to oryzine B and oryzine A, however, hydroxylation of the diene by the alpha-ketoglutarate-dependent dioxygenase oryG and lactonisation by the lactonohydrolases oryH or oryL could give oryzine B directly. Finally, enoyl reduction by the dehydrogenase oryD would then convert oryzine B into oryzine A. This chain is Cytochrome P450 monooxygenase oryQ, found in Aspergillus oryzae (strain ATCC 42149 / RIB 40) (Yellow koji mold).